We begin with the raw amino-acid sequence, 213 residues long: Peptidyl-tRNA hydrolase (213 aa).

Tyr15 is a binding site for tRNA. The active-site Proton acceptor is His20. Residues Tyr66, Asn68, and Asn114 each contribute to the tRNA site. A disordered region spans residues 186–213 (MHAKPPRPKPPRPVTAPGAPVPPTEPSA). The span at 196 to 213 (PRPVTAPGAPVPPTEPSA) shows a compositional bias: pro residues.

This sequence belongs to the PTH family. As to quaternary structure, monomer.

Its subcellular location is the cytoplasm. The enzyme catalyses an N-acyl-L-alpha-aminoacyl-tRNA + H2O = an N-acyl-L-amino acid + a tRNA + H(+). Functionally, hydrolyzes ribosome-free peptidyl-tRNAs (with 1 or more amino acids incorporated), which drop off the ribosome during protein synthesis, or as a result of ribosome stalling. In terms of biological role, catalyzes the release of premature peptidyl moieties from peptidyl-tRNA molecules trapped in stalled 50S ribosomal subunits, and thus maintains levels of free tRNAs and 50S ribosomes. This chain is Peptidyl-tRNA hydrolase, found in Leptothrix cholodnii (strain ATCC 51168 / LMG 8142 / SP-6) (Leptothrix discophora (strain SP-6)).